We begin with the raw amino-acid sequence, 513 residues long: MGAAAKLAFAVFLISCSSGAILGRSETQECLFFNANWERDRTNQTGVEPCYGDKDKRRHCFATWKNISGSIEIVKQGCWLDDINCYDRTDCIEKKDSPEVYFCCCEGNMCNEKFSYFPEMEVTQPTSNPVTPKPPYYNILLYSLVPLMLIAGIVICAFWVYRHHMMAYPPVLVPTQDPGPPPPSPLLGLKPLQLLEVKARGRFGCVWKAQLLNEYVAVKIFPIQDKQSWQNEYEVYSLPGMKHENILQFIGAEKRGTSVDVDLWLITAFHEKGSLSDFLKANVVSWNELCHIAETMARGLAYLHEDIPGLKDGHKPAISHRDIKSKNVLLKNNLTACIADFGLALKFEAGKSGGDTHGQVGTRRYMAPEVLEGAINFQRDAFLRIDMYAMGLVLWELASRCTAADGPVDEYMLPFEEEIGQHPSLEDMQEVVVHKKKRPVLRDYWQKHAGMAMLCETIEECWDHDAEARLSAGCLGERITQMQRLTNIITTEDIVTVVTMVTNVDFPPKESSL.

A signal peptide spans 1–19 (MGAAAKLAFAVFLISCSSG). Residues 20–135 (AILGRSETQE…TSNPVTPKPP (116 aa)) lie on the Extracellular side of the membrane. Intrachain disulfides connect Cys-30-Cys-60, Cys-50-Cys-78, Cys-85-Cys-104, Cys-91-Cys-103, and Cys-105-Cys-110. Asn-43 and Asn-66 each carry an N-linked (GlcNAc...) asparagine glycan. The helical transmembrane segment at 136–161 (YYNILLYSLVPLMLIAGIVICAFWVY) threads the bilayer. The Cytoplasmic segment spans residues 162–513 (RHHMMAYPPV…VDFPPKESSL (352 aa)). A Protein kinase domain is found at 192–485 (LQLLEVKARG…GERITQMQRL (294 aa)). ATP is bound by residues 198–206 (KARGRFGCV) and Lys-219. The Proton acceptor role is filled by Asp-322.

This sequence belongs to the protein kinase superfamily. TKL Ser/Thr protein kinase family. TGFB receptor subfamily. In terms of assembly, part of a complex consisting of MAGI2/ARIP1, ACVR2A, ACVR1B and SMAD3. Interacts with MAGI2/ARIP1. Interacts with type I receptor ACVR1. Interacts with BMP7. Interacts with TSC22D1/TSC-22. Interacts with activin A/INHBA. Mg(2+) serves as cofactor. Mn(2+) is required as a cofactor.

The protein localises to the cell membrane. The enzyme catalyses L-threonyl-[receptor-protein] + ATP = O-phospho-L-threonyl-[receptor-protein] + ADP + H(+). It catalyses the reaction L-seryl-[receptor-protein] + ATP = O-phospho-L-seryl-[receptor-protein] + ADP + H(+). In terms of biological role, on ligand binding, forms a receptor complex consisting of two type II and two type I transmembrane serine/threonine kinases. Type II receptors phosphorylate and activate type I receptors which autophosphorylate, then bind and activate SMAD transcriptional regulators. Receptor for activin A, activin B and inhibin A. Mediates induction of adipogenesis by GDF6. The sequence is that of Activin receptor type-2A from Rattus norvegicus (Rat).